A 166-amino-acid chain; its full sequence is Putative 4-hydroxy-4-methyl-2-oxoglutarate aldolase (166 aa).

Substrate contacts are provided by residues 74–77 (GDQI) and arginine 96. Aspartate 97 is a binding site for a divalent metal cation.

The protein belongs to the class II aldolase/RraA-like family. In terms of assembly, homotrimer. A divalent metal cation serves as cofactor.

The enzyme catalyses 4-hydroxy-4-methyl-2-oxoglutarate = 2 pyruvate. It catalyses the reaction oxaloacetate + H(+) = pyruvate + CO2. Catalyzes the aldol cleavage of 4-hydroxy-4-methyl-2-oxoglutarate (HMG) into 2 molecules of pyruvate. Also contains a secondary oxaloacetate (OAA) decarboxylase activity due to the common pyruvate enolate transition state formed following C-C bond cleavage in the retro-aldol and decarboxylation reactions. In Xanthomonas axonopodis pv. citri (strain 306), this protein is Putative 4-hydroxy-4-methyl-2-oxoglutarate aldolase.